The primary structure comprises 474 residues: tRNA-2-methylthio-N(6)-dimethylallyladenosine synthase (474 aa).

Residues lysine 3 to alanine 120 enclose the MTTase N-terminal domain. The [4Fe-4S] cluster site is built by cysteine 12, cysteine 49, cysteine 83, cysteine 157, cysteine 161, and cysteine 164. A Radical SAM core domain is found at arginine 143–arginine 375. The TRAM domain maps to arginine 378–arginine 441.

It belongs to the methylthiotransferase family. MiaB subfamily. As to quaternary structure, monomer. [4Fe-4S] cluster serves as cofactor.

It localises to the cytoplasm. The enzyme catalyses N(6)-dimethylallyladenosine(37) in tRNA + (sulfur carrier)-SH + AH2 + 2 S-adenosyl-L-methionine = 2-methylsulfanyl-N(6)-dimethylallyladenosine(37) in tRNA + (sulfur carrier)-H + 5'-deoxyadenosine + L-methionine + A + S-adenosyl-L-homocysteine + 2 H(+). Its function is as follows. Catalyzes the methylthiolation of N6-(dimethylallyl)adenosine (i(6)A), leading to the formation of 2-methylthio-N6-(dimethylallyl)adenosine (ms(2)i(6)A) at position 37 in tRNAs that read codons beginning with uridine. The polypeptide is tRNA-2-methylthio-N(6)-dimethylallyladenosine synthase (Shewanella woodyi (strain ATCC 51908 / MS32)).